A 327-amino-acid polypeptide reads, in one-letter code: Gamma-resorcylate decarboxylase (327 aa).

Zn(2+) is bound by residues Glu-8, His-10, His-164, and Asp-287. The active site involves Asp-287.

Belongs to the metallo-dependent hydrolases superfamily. ACMSD family. In terms of assembly, homotetramer. Zn(2+) is required as a cofactor.

The catalysed reaction is 2,6-dihydroxybenzoate + H(+) = resorcinol + CO2. It carries out the reaction 2,3-dihydroxybenzoate + H(+) = catechol + CO2. The protein operates within aromatic compound metabolism. With respect to regulation, insensitive to oxygen. Decarboxylation and carboxylation are inhibited by AgNO(3) and by diethyl pyrocarbonate, a histidine residue-specific inhibitor. Decarboxylation is also inhibited by HgCl(2) and activated by MgCl(2). Its function is as follows. Involved in the gamma-resorcylate (2,6-dihydroxybenzoate) catabolism. Catalyzes the reversible decarboxylation of gamma-resorcylate to resorcinol. Also catalyzes the decarboxylation of 2,3-dihydroxybenzoate to catechol, but does not act on 2-hydroxybenzoic acid 3-hydroxybenzoic acid, 4-hydroxybenzoic acid, 3,4-dihydroxybenzoic acid, 2,5-dihydroxybenzoic acid, 2,3,4-trihydroxybenzoic acid, 3,4,5-trihydroxybenzoic acid, 4-aminobenzoic acid, o-hydroxyphenylacetic acid and vanillic acid. Resorcinol and catechol can both be carboxylated by the reverse reaction. This chain is Gamma-resorcylate decarboxylase, found in Rhizobium radiobacter (Agrobacterium tumefaciens).